The following is a 286-amino-acid chain: uncharacterized protein (286 aa).

Positions 26–268 constitute an AB hydrolase-1 domain; that stretch reads PLIILCHGFC…DACHYDIYEG (243 aa).

The protein to E.coli YcjY.

This is an uncharacterized protein from Escherichia coli.